We begin with the raw amino-acid sequence, 102 residues long: NADH-quinone oxidoreductase subunit K (102 aa).

A run of 3 helical transmembrane segments spans residues 6-26, 31-51, and 62-82; these read ATHF…GVLT, LVIF…LIGF, and VFAL…LGIV.

Belongs to the complex I subunit 4L family. In terms of assembly, NDH-1 is composed of 14 different subunits. Subunits NuoA, H, J, K, L, M, N constitute the membrane sector of the complex.

It localises to the cell membrane. It carries out the reaction a quinone + NADH + 5 H(+)(in) = a quinol + NAD(+) + 4 H(+)(out). NDH-1 shuttles electrons from NADH, via FMN and iron-sulfur (Fe-S) centers, to quinones in the respiratory chain. The immediate electron acceptor for the enzyme in this species is believed to be ubiquinone. Couples the redox reaction to proton translocation (for every two electrons transferred, four hydrogen ions are translocated across the cytoplasmic membrane), and thus conserves the redox energy in a proton gradient. The protein is NADH-quinone oxidoreductase subunit K of Thermomicrobium roseum (strain ATCC 27502 / DSM 5159 / P-2).